The primary structure comprises 217 residues: Large ribosomal subunit protein uL3 (217 aa).

Residues 133–145 show a composition bias toward polar residues; the sequence is GRASHGNSRSHNV. The segment at 133 to 153 is disordered; sequence GRASHGNSRSHNVPGSIGMAQ. N5-methylglutamine is present on Q153.

Belongs to the universal ribosomal protein uL3 family. In terms of assembly, part of the 50S ribosomal subunit. Forms a cluster with proteins L14 and L19. In terms of processing, methylated by PrmB.

Its function is as follows. One of the primary rRNA binding proteins, it binds directly near the 3'-end of the 23S rRNA, where it nucleates assembly of the 50S subunit. The polypeptide is Large ribosomal subunit protein uL3 (Ralstonia pickettii (strain 12J)).